Here is a 335-residue protein sequence, read N- to C-terminus: Phosphate acyltransferase (335 aa).

Belongs to the PlsX family. In terms of assembly, homodimer. Probably interacts with PlsY.

It localises to the cytoplasm. It carries out the reaction a fatty acyl-[ACP] + phosphate = an acyl phosphate + holo-[ACP]. The protein operates within lipid metabolism; phospholipid metabolism. Its function is as follows. Catalyzes the reversible formation of acyl-phosphate (acyl-PO(4)) from acyl-[acyl-carrier-protein] (acyl-ACP). This enzyme utilizes acyl-ACP as fatty acyl donor, but not acyl-CoA. In Streptococcus equi subsp. zooepidemicus (strain MGCS10565), this protein is Phosphate acyltransferase.